A 568-amino-acid polypeptide reads, in one-letter code: Cyclin-dependent kinase-like 2 (568 aa).

Residues 4 to 289 enclose the Protein kinase domain; it reads YENLGLVGEG…CADLLRHDFF (286 aa). Residues 10-18 and Lys-33 contribute to the ATP site; that span reads VGEGSYGMV. A [NKR]KIAxRE motif is present at residues 45-51; the sequence is KKIAMRE. The active-site Proton acceptor is the Asp-126. Disordered stretches follow at residues 309 to 333 and 545 to 568; these read DARNNSLPKKSQNRKKEKDDALGEE and SHQGAGSPLSDDSEADLPRMEHQH. The span at 322–333 shows a compositional bias: basic and acidic residues; it reads RKKEKDDALGEE.

It belongs to the protein kinase superfamily. CMGC Ser/Thr protein kinase family. CDC2/CDKX subfamily. In terms of tissue distribution, expressed in testis, kidney, lung and brain.

The protein resides in the cytoplasm. It localises to the nucleus. The enzyme catalyses L-seryl-[protein] + ATP = O-phospho-L-seryl-[protein] + ADP + H(+). It catalyses the reaction L-threonyl-[protein] + ATP = O-phospho-L-threonyl-[protein] + ADP + H(+). The chain is Cyclin-dependent kinase-like 2 from Mus musculus (Mouse).